A 457-amino-acid chain; its full sequence is Phosphoglucosamine mutase (457 aa).

The active-site Phosphoserine intermediate is Ser-106. The Mg(2+) site is built by Ser-106, Asp-245, Asp-247, and Asp-249. The residue at position 106 (Ser-106) is a Phosphoserine.

It belongs to the phosphohexose mutase family. Mg(2+) serves as cofactor. Activated by phosphorylation.

The enzyme catalyses alpha-D-glucosamine 1-phosphate = D-glucosamine 6-phosphate. Its function is as follows. Catalyzes the conversion of glucosamine-6-phosphate to glucosamine-1-phosphate. The sequence is that of Phosphoglucosamine mutase from Methylibium petroleiphilum (strain ATCC BAA-1232 / LMG 22953 / PM1).